Consider the following 556-residue polypeptide: Portal protein (556 aa).

The tract at residues 527 to 556 (AQGAKTLSETQTSDPSALTAIANAAGAPQQ) is disordered. Residues 533–542 (LSETQTSDPS) are compositionally biased toward polar residues.

Belongs to the podoviridae head-to-tail connector protein family. As to quaternary structure, homododecamer.

It localises to the virion. In terms of biological role, forms the portal vertex of the capsid. This portal plays critical roles in head assembly, genome packaging, neck/tail attachment, and genome ejection. The portal protein multimerizes as a single ring-shaped homododecamer arranged around a central channel. This Salmonella phage epsilon15 protein is Portal protein.